We begin with the raw amino-acid sequence, 253 residues long: Isopentenyl-diphosphate delta-isomerase IDI1 (253 aa).

Lysine 61 contributes to the substrate binding site. 2 residues coordinate Mg(2+): histidine 65 and histidine 76. Residues 74–224 (LLHRAFSVFL…SLVFTPWFKL (151 aa)) form the Nudix hydrolase domain. Residues glutamine 94 and lysine 99 each coordinate substrate. Residue cysteine 111 is part of the active site. Residue serine 112 participates in substrate binding. A Nudix box motif is present at residues 112-145 (SHPLHIPTETGSTLEDSIAGVKRAAQRKLEHELG). Mg(2+) is bound by residues glutamate 174 and glutamate 176. Glutamate 176 is a catalytic residue.

The protein belongs to the IPP isomerase type 1 family. Requires Mg(2+) as cofactor.

The catalysed reaction is isopentenyl diphosphate = dimethylallyl diphosphate. It functions in the pathway isoprenoid biosynthesis; dimethylallyl diphosphate biosynthesis; dimethylallyl diphosphate from isopentenyl diphosphate: step 1/1. In terms of biological role, isopentenyl-diphosphate delta-isomerase; part of the second module of ergosterol biosynthesis pathway that includes the middle steps of the pathway. IDI1 catalyzes the 1,3-allylic rearrangement of isopentenyl (IPP) to its highly electrophilic allylic isomer, dimethylallyl diphosphate (DMAPP). The second module is carried out in the vacuole and involves the formation of farnesyl diphosphate, which is also an important intermediate in the biosynthesis of ubiquinone, dolichol, heme and prenylated proteins. Activity by the mevalonate kinase ERG12 (FG05912) first converts mevalonate into 5-phosphomevalonate. 5-phosphomevalonate is then further converted to 5-diphosphomevalonate by the phosphomevalonate kinase ERG8 (FG09764). The diphosphomevalonate decarboxylase ERG19 (FG10424) then produces isopentenyl diphosphate. The isopentenyl-diphosphate delta-isomerase IDI1 (FG09722) then catalyzes the 1,3-allylic rearrangement of the homoallylic substrate isopentenyl (IPP) to its highly electrophilic allylic isomer, dimethylallyl diphosphate (DMAPP). Finally the farnesyl diphosphate synthase ERG20 (FG06784) catalyzes the sequential condensation of isopentenyl pyrophosphate with dimethylallyl pyrophosphate, and then with the resultant geranylpyrophosphate to the ultimate product farnesyl pyrophosphate. The chain is Isopentenyl-diphosphate delta-isomerase IDI1 from Gibberella zeae (strain ATCC MYA-4620 / CBS 123657 / FGSC 9075 / NRRL 31084 / PH-1) (Wheat head blight fungus).